A 227-amino-acid polypeptide reads, in one-letter code: Phosphoribosylaminoimidazole-succinocarboxamide synthase (227 aa).

This sequence belongs to the SAICAR synthetase family.

The enzyme catalyses 5-amino-1-(5-phospho-D-ribosyl)imidazole-4-carboxylate + L-aspartate + ATP = (2S)-2-[5-amino-1-(5-phospho-beta-D-ribosyl)imidazole-4-carboxamido]succinate + ADP + phosphate + 2 H(+). Its pathway is purine metabolism; IMP biosynthesis via de novo pathway; 5-amino-1-(5-phospho-D-ribosyl)imidazole-4-carboxamide from 5-amino-1-(5-phospho-D-ribosyl)imidazole-4-carboxylate: step 1/2. This chain is Phosphoribosylaminoimidazole-succinocarboxamide synthase, found in Clostridium tetani (strain Massachusetts / E88).